We begin with the raw amino-acid sequence, 789 residues long: Bifunctional purine biosynthetic protein PUR2,5 (789 aa).

Residues 1 to 428 (MEKINVLVVG…NRTDIAHRAF (428 aa)) form a GARS region. Residues 114–321 (KDFMKKHNIP…LLELMLATVE (208 aa)) form the ATP-grasp domain. 140 to 201 (IANSSHNLVI…EEFLEGDELS (62 aa)) contributes to the ATP binding site. Mg(2+)-binding residues include Glu291 and Asn293. Residues 438-773 (LTYEDAGVSV…TVYTIGKLVE (336 aa)) are AIRS.

The protein in the N-terminal section; belongs to the GARS family. It in the C-terminal section; belongs to the AIR synthase family. Mg(2+) is required as a cofactor. It depends on Mn(2+) as a cofactor.

It is found in the cytoplasm. Its subcellular location is the cytosol. It catalyses the reaction 2-formamido-N(1)-(5-O-phospho-beta-D-ribosyl)acetamidine + ATP = 5-amino-1-(5-phospho-beta-D-ribosyl)imidazole + ADP + phosphate + H(+). The enzyme catalyses 5-phospho-beta-D-ribosylamine + glycine + ATP = N(1)-(5-phospho-beta-D-ribosyl)glycinamide + ADP + phosphate + H(+). It functions in the pathway purine metabolism; IMP biosynthesis via de novo pathway; 5-amino-1-(5-phospho-D-ribosyl)imidazole from N(2)-formyl-N(1)-(5-phospho-D-ribosyl)glycinamide: step 2/2. Its pathway is purine metabolism; IMP biosynthesis via de novo pathway; N(1)-(5-phospho-D-ribosyl)glycinamide from 5-phospho-alpha-D-ribose 1-diphosphate: step 2/2. In terms of biological role, catalyzes the second and fifth step in the 'de novo' purine biosynthesis pathway; contains phosphoribosylamine--glycine ligase (GARS) and phosphoribosylformylglycinamidine cyclo-ligase (AIRS) activities. In Pichia angusta (Yeast), this protein is Bifunctional purine biosynthetic protein PUR2,5.